The chain runs to 339 residues: 3-isopropylmalate dehydrogenase (339 aa).

Arg-88, Arg-98, Arg-122, and Asp-212 together coordinate substrate. Asp-212, Asp-236, and Asp-240 together coordinate Mg(2+). Gly-272 to Asp-284 contributes to the NAD(+) binding site.

Belongs to the isocitrate and isopropylmalate dehydrogenases family. LeuB type 2 subfamily. Homodimer. It depends on Mg(2+) as a cofactor. Mn(2+) serves as cofactor.

It localises to the cytoplasm. The enzyme catalyses (2R,3S)-3-isopropylmalate + NAD(+) = 4-methyl-2-oxopentanoate + CO2 + NADH. It participates in amino-acid biosynthesis; L-leucine biosynthesis; L-leucine from 3-methyl-2-oxobutanoate: step 3/4. In terms of biological role, catalyzes the oxidation of 3-carboxy-2-hydroxy-4-methylpentanoate (3-isopropylmalate) to 3-carboxy-4-methyl-2-oxopentanoate. The product decarboxylates to 4-methyl-2 oxopentanoate. This chain is 3-isopropylmalate dehydrogenase, found in Corynebacterium aurimucosum (strain ATCC 700975 / DSM 44827 / CIP 107346 / CN-1) (Corynebacterium nigricans).